A 114-amino-acid polypeptide reads, in one-letter code: Phosphoribosyl-AMP cyclohydrolase (114 aa).

Residue aspartate 76 coordinates Mg(2+). Cysteine 77 contacts Zn(2+). Mg(2+) is bound by residues aspartate 78 and aspartate 80. 2 residues coordinate Zn(2+): cysteine 93 and cysteine 100.

This sequence belongs to the PRA-CH family. Homodimer. Requires Mg(2+) as cofactor. Zn(2+) serves as cofactor.

It localises to the cytoplasm. It carries out the reaction 1-(5-phospho-beta-D-ribosyl)-5'-AMP + H2O = 1-(5-phospho-beta-D-ribosyl)-5-[(5-phospho-beta-D-ribosylamino)methylideneamino]imidazole-4-carboxamide. The protein operates within amino-acid biosynthesis; L-histidine biosynthesis; L-histidine from 5-phospho-alpha-D-ribose 1-diphosphate: step 3/9. Functionally, catalyzes the hydrolysis of the adenine ring of phosphoribosyl-AMP. This is Phosphoribosyl-AMP cyclohydrolase from Streptococcus gordonii (strain Challis / ATCC 35105 / BCRC 15272 / CH1 / DL1 / V288).